A 68-amino-acid chain; its full sequence is Large ribosomal subunit protein bL31 (68 aa).

4 residues coordinate Zn(2+): cysteine 17, cysteine 19, cysteine 37, and cysteine 40.

Belongs to the bacterial ribosomal protein bL31 family. Type A subfamily. Part of the 50S ribosomal subunit. Zn(2+) is required as a cofactor.

In terms of biological role, binds the 23S rRNA. The polypeptide is Large ribosomal subunit protein bL31 (Dehalococcoides mccartyi (strain ATCC BAA-2266 / KCTC 15142 / 195) (Dehalococcoides ethenogenes (strain 195))).